Reading from the N-terminus, the 150-residue chain is UPF0178 protein PC1_0756 (150 aa).

The protein belongs to the UPF0178 family.

The protein is UPF0178 protein PC1_0756 of Pectobacterium carotovorum subsp. carotovorum (strain PC1).